A 482-amino-acid chain; its full sequence is GTPase Der (482 aa).

2 consecutive EngA-type G domains span residues 3 to 166 and 195 to 368; these read PVVA…SEQF and IKLA…NSAT. GTP is bound by residues 9–16, 56–60, 118–121, 201–208, 248–252, and 313–316; these read GRPNVGKS, DTGGI, NKVD, GKPNVGKS, DTAGV, and NKWD. The 85-residue stretch at 369–453 folds into the KH-like domain; it reads KRINTSMLTR…PIKVEFREGA (85 aa).

Belongs to the TRAFAC class TrmE-Era-EngA-EngB-Septin-like GTPase superfamily. EngA (Der) GTPase family. In terms of assembly, associates with the 50S ribosomal subunit.

In terms of biological role, GTPase that plays an essential role in the late steps of ribosome biogenesis. The protein is GTPase Der of Pseudoalteromonas atlantica (strain T6c / ATCC BAA-1087).